The chain runs to 165 residues: Probable velvet family sexual development regulator CC1G_12219 (165 aa).

Residues 1–121 (MSNTDAQTSF…SVWGAQVNVR (121 aa)) form the Velvet domain.

Belongs to the velvet family.

Its subcellular location is the nucleus. Functionally, velvet-domain-containing protein that probably acts as a positive regulator of sexual development. The protein is Probable velvet family sexual development regulator CC1G_12219 of Coprinopsis cinerea (strain Okayama-7 / 130 / ATCC MYA-4618 / FGSC 9003) (Inky cap fungus).